A 185-amino-acid polypeptide reads, in one-letter code: Ribosome-recycling factor (185 aa).

This sequence belongs to the RRF family.

It is found in the cytoplasm. In terms of biological role, responsible for the release of ribosomes from messenger RNA at the termination of protein biosynthesis. May increase the efficiency of translation by recycling ribosomes from one round of translation to another. The sequence is that of Ribosome-recycling factor from Xanthomonas oryzae pv. oryzae (strain MAFF 311018).